Consider the following 148-residue polypeptide: Large ribosomal subunit protein bL9 (148 aa).

The protein belongs to the bacterial ribosomal protein bL9 family.

Its function is as follows. Binds to the 23S rRNA. The chain is Large ribosomal subunit protein bL9 from Sulfurimonas denitrificans (strain ATCC 33889 / DSM 1251) (Thiomicrospira denitrificans (strain ATCC 33889 / DSM 1251)).